The primary structure comprises 308 residues: Probable manganese-dependent inorganic pyrophosphatase (308 aa).

Mn(2+) contacts are provided by H9, D13, D15, D75, H97, and D149.

It belongs to the PPase class C family. It depends on Mn(2+) as a cofactor.

The protein localises to the cytoplasm. It catalyses the reaction diphosphate + H2O = 2 phosphate + H(+). This is Probable manganese-dependent inorganic pyrophosphatase from Staphylococcus carnosus (strain TM300).